The primary structure comprises 302 residues: MQLRKLTTAMLVMGLSAGLAHAEDGAPAAGSTLDKIAKNGVIVVGHRESSVPFSYYDNQQKVVGYSQDYSNAIVEAVKKKLNKPDLQVKLIPITSQNRIPLLQNGTFDFECGSTTNNLERQKQAAFSDTIFVVGTRLLTKKGGDIKDFPDLKGKAVVVTSGTTSEILLHKLNEEQKMGMRIISAKDHGDSFRTLESGRAVAFMMDDALLAGERAKAKKPDNWEIVGKPQSQEAYGCMLRKNDPEFKKLMDDTIAQAQTSGEAEKWFDKWFKNPIPPKNLNMNFELSDEMKALFKAPNDKALN.

The signal sequence occupies residues 1-22 (MQLRKLTTAMLVMGLSAGLAHA).

The protein belongs to the bacterial solute-binding protein 3 family. In terms of assembly, the complex is composed of two ATP-binding proteins (GltL), two transmembrane proteins (GltJ and GltK) and a solute-binding protein (GltI).

Its subcellular location is the periplasm. In terms of biological role, part of the ABC transporter complex GltIJKL involved in glutamate and aspartate uptake. Binds to both glutamate and aspartate. The polypeptide is Glutamate/aspartate import solute-binding protein (gltI) (Salmonella typhimurium (strain LT2 / SGSC1412 / ATCC 700720)).